The primary structure comprises 223 residues: 7-cyano-7-deazaguanine synthase (223 aa).

Residue 8-18 coordinates ATP; it reads MSGGMDSTLCA. Residues cysteine 187, cysteine 195, cysteine 198, and cysteine 201 each contribute to the Zn(2+) site.

Belongs to the QueC family. Zn(2+) is required as a cofactor.

The catalysed reaction is 7-carboxy-7-deazaguanine + NH4(+) + ATP = 7-cyano-7-deazaguanine + ADP + phosphate + H2O + H(+). It participates in purine metabolism; 7-cyano-7-deazaguanine biosynthesis. In terms of biological role, catalyzes the ATP-dependent conversion of 7-carboxy-7-deazaguanine (CDG) to 7-cyano-7-deazaguanine (preQ(0)). The protein is 7-cyano-7-deazaguanine synthase of Campylobacter curvus (strain 525.92).